The primary structure comprises 346 residues: Dihydroorotase (346 aa).

Zn(2+)-binding residues include H13 and H15. Residues 15–17 (HLR) and N41 contribute to the substrate site. Residues K99, H136, and H174 each coordinate Zn(2+). K99 is subject to N6-carboxylysine. H136 is a binding site for substrate. L219 is a substrate binding site. A Zn(2+)-binding site is contributed by D247. D247 is an active-site residue. Substrate is bound by residues H251 and A263.

The protein belongs to the metallo-dependent hydrolases superfamily. DHOase family. Class II DHOase subfamily. As to quaternary structure, homodimer. It depends on Zn(2+) as a cofactor.

It carries out the reaction (S)-dihydroorotate + H2O = N-carbamoyl-L-aspartate + H(+). It functions in the pathway pyrimidine metabolism; UMP biosynthesis via de novo pathway; (S)-dihydroorotate from bicarbonate: step 3/3. Functionally, catalyzes the reversible cyclization of carbamoyl aspartate to dihydroorotate. This is Dihydroorotase from Picosynechococcus sp. (strain ATCC 27264 / PCC 7002 / PR-6) (Agmenellum quadruplicatum).